The primary structure comprises 284 residues: 2-dehydro-3-deoxyphosphooctonate aldolase (284 aa).

It belongs to the KdsA family.

It is found in the cytoplasm. The enzyme catalyses D-arabinose 5-phosphate + phosphoenolpyruvate + H2O = 3-deoxy-alpha-D-manno-2-octulosonate-8-phosphate + phosphate. Its pathway is carbohydrate biosynthesis; 3-deoxy-D-manno-octulosonate biosynthesis; 3-deoxy-D-manno-octulosonate from D-ribulose 5-phosphate: step 2/3. It functions in the pathway bacterial outer membrane biogenesis; lipopolysaccharide biosynthesis. This Erwinia tasmaniensis (strain DSM 17950 / CFBP 7177 / CIP 109463 / NCPPB 4357 / Et1/99) protein is 2-dehydro-3-deoxyphosphooctonate aldolase.